The following is a 276-amino-acid chain: Large ribosomal subunit protein uL2 (276 aa).

Disordered regions lie at residues 34 to 55 and 221 to 276; these read LQPLKNNAGRNNNGRITVRHQG and RGSV…RRTK. Over residues 37–48 the composition is skewed to polar residues; the sequence is LKNNAGRNNNGR.

It belongs to the universal ribosomal protein uL2 family. In terms of assembly, part of the 50S ribosomal subunit. Forms a bridge to the 30S subunit in the 70S ribosome.

Functionally, one of the primary rRNA binding proteins. Required for association of the 30S and 50S subunits to form the 70S ribosome, for tRNA binding and peptide bond formation. It has been suggested to have peptidyltransferase activity; this is somewhat controversial. Makes several contacts with the 16S rRNA in the 70S ribosome. The sequence is that of Large ribosomal subunit protein uL2 from Enterococcus faecalis (strain ATCC 700802 / V583).